Consider the following 856-residue polypeptide: DNA mismatch repair protein MutS (856 aa).

Position 615-622 (615-622 (GPNMGGKS)) interacts with ATP. The segment covering 798-807 (ETTGHQQAIK) has biased composition (polar residues). The tract at residues 798–817 (ETTGHQQAIKNPSKAPREEQ) is disordered.

Belongs to the DNA mismatch repair MutS family.

Functionally, this protein is involved in the repair of mismatches in DNA. It is possible that it carries out the mismatch recognition step. This protein has a weak ATPase activity. This chain is DNA mismatch repair protein MutS, found in Photobacterium profundum (strain SS9).